Consider the following 347-residue polypeptide: NADH-quinone oxidoreductase subunit H (347 aa).

The next 8 helical transmembrane spans lie at Ile-25–Met-45, Phe-95–Ile-115, Ile-128–Gly-148, Ile-168–Phe-188, Gly-200–Val-220, Phe-251–Phe-271, Phe-284–Leu-304, and Val-324–Ser-344.

Belongs to the complex I subunit 1 family. NDH-1 is composed of 14 different subunits. Subunits NuoA, H, J, K, L, M, N constitute the membrane sector of the complex.

It localises to the cell inner membrane. It catalyses the reaction a quinone + NADH + 5 H(+)(in) = a quinol + NAD(+) + 4 H(+)(out). In terms of biological role, NDH-1 shuttles electrons from NADH, via FMN and iron-sulfur (Fe-S) centers, to quinones in the respiratory chain. The immediate electron acceptor for the enzyme in this species is believed to be ubiquinone. Couples the redox reaction to proton translocation (for every two electrons transferred, four hydrogen ions are translocated across the cytoplasmic membrane), and thus conserves the redox energy in a proton gradient. This subunit may bind ubiquinone. This is NADH-quinone oxidoreductase subunit H from Psychrobacter cryohalolentis (strain ATCC BAA-1226 / DSM 17306 / VKM B-2378 / K5).